A 246-amino-acid chain; its full sequence is 1-(5-phosphoribosyl)-5-[(5-phosphoribosylamino)methylideneamino] imidazole-4-carboxamide isomerase (246 aa).

Asp-8 functions as the Proton acceptor in the catalytic mechanism. Catalysis depends on Asp-131, which acts as the Proton donor.

Belongs to the HisA/HisF family.

The protein resides in the cytoplasm. It catalyses the reaction 1-(5-phospho-beta-D-ribosyl)-5-[(5-phospho-beta-D-ribosylamino)methylideneamino]imidazole-4-carboxamide = 5-[(5-phospho-1-deoxy-D-ribulos-1-ylimino)methylamino]-1-(5-phospho-beta-D-ribosyl)imidazole-4-carboxamide. It participates in amino-acid biosynthesis; L-histidine biosynthesis; L-histidine from 5-phospho-alpha-D-ribose 1-diphosphate: step 4/9. This chain is 1-(5-phosphoribosyl)-5-[(5-phosphoribosylamino)methylideneamino] imidazole-4-carboxamide isomerase, found in Lactococcus lactis subsp. cremoris (strain MG1363).